The sequence spans 436 residues: Gamma-glutamyl phosphate reductase (436 aa).

This sequence belongs to the gamma-glutamyl phosphate reductase family.

The protein resides in the cytoplasm. The catalysed reaction is L-glutamate 5-semialdehyde + phosphate + NADP(+) = L-glutamyl 5-phosphate + NADPH + H(+). It functions in the pathway amino-acid biosynthesis; L-proline biosynthesis; L-glutamate 5-semialdehyde from L-glutamate: step 2/2. In terms of biological role, catalyzes the NADPH-dependent reduction of L-glutamate 5-phosphate into L-glutamate 5-semialdehyde and phosphate. The product spontaneously undergoes cyclization to form 1-pyrroline-5-carboxylate. In Salinibacter ruber (strain DSM 13855 / M31), this protein is Gamma-glutamyl phosphate reductase.